We begin with the raw amino-acid sequence, 77 residues long: SS18-like protein 2 (77 aa).

The SH2-binding motif lies at 50–53 (YQHV).

It belongs to the SS18 family.

The sequence is that of SS18-like protein 2 (SS18L2) from Homo sapiens (Human).